Reading from the N-terminus, the 389-residue chain is Galactokinase (389 aa).

Residue glutamate 34 to aspartate 37 participates in substrate binding. ATP-binding positions include serine 68 and glycine 125 to serine 131. Serine 131 and glutamate 163 together coordinate Mg(2+). The active-site Proton acceptor is the aspartate 175. Residue tyrosine 225 participates in substrate binding.

This sequence belongs to the GHMP kinase family. GalK subfamily.

The protein localises to the cytoplasm. It carries out the reaction alpha-D-galactose + ATP = alpha-D-galactose 1-phosphate + ADP + H(+). Its pathway is carbohydrate metabolism; galactose metabolism. Its function is as follows. Catalyzes the transfer of the gamma-phosphate of ATP to D-galactose to form alpha-D-galactose-1-phosphate (Gal-1-P). In Clostridium acetobutylicum (strain ATCC 824 / DSM 792 / JCM 1419 / IAM 19013 / LMG 5710 / NBRC 13948 / NRRL B-527 / VKM B-1787 / 2291 / W), this protein is Galactokinase.